The primary structure comprises 404 residues: F-box protein At2g17036 (404 aa).

The 49-residue stretch at 2 to 50 (MDWATLPKDLLDLISKCLESSFDLIQFRSVCSSWRSAAGPKRLLWAHNL) folds into the F-box domain.

The polypeptide is F-box protein At2g17036 (Arabidopsis thaliana (Mouse-ear cress)).